The primary structure comprises 289 residues: uncharacterized protein (289 aa).

The N-terminal stretch at 1-19 is a signal peptide; it reads MAKWLGAPLARGVSTATRA. Helical transmembrane passes span 90-110 and 257-277; these read GLLA…GWGV and AALS…LVFA.

It localises to the cell membrane. This is an uncharacterized protein from Mycobacterium tuberculosis (strain ATCC 25618 / H37Rv).